A 365-amino-acid chain; its full sequence is GTPase Obg (365 aa).

An Obg domain is found at 1-177 (MFTDYVRILA…GQFLLELKTI (177 aa)). Residues 64 to 85 (QFAEDGQPGKGQKRKGRDGKNL) form a disordered region. The OBG-type G domain maps to 178 to 348 (ADVGFVGLPN…FLNSCRKSFE (171 aa)). Residues 184–191 (GLPNSGKS), 209–213 (FTTLK), 231–234 (DIPG), 300–303 (NKVD), and 329–331 (SAL) each bind GTP. 2 residues coordinate Mg(2+): S191 and T211.

This sequence belongs to the TRAFAC class OBG-HflX-like GTPase superfamily. OBG GTPase family. As to quaternary structure, monomer. The cofactor is Mg(2+).

The protein localises to the cytoplasm. In terms of biological role, an essential GTPase which binds GTP, GDP and possibly (p)ppGpp with moderate affinity, with high nucleotide exchange rates and a fairly low GTP hydrolysis rate. Plays a role in control of the cell cycle, stress response, ribosome biogenesis and in those bacteria that undergo differentiation, in morphogenesis control. The polypeptide is GTPase Obg (Methylacidiphilum infernorum (isolate V4) (Methylokorus infernorum (strain V4))).